Here is a 152-residue protein sequence, read N- to C-terminus: Aspartate carbamoyltransferase regulatory chain (152 aa).

The Zn(2+) site is built by C107, C112, C136, and C139.

It belongs to the PyrI family. As to quaternary structure, contains catalytic and regulatory chains. Requires Zn(2+) as cofactor.

In terms of biological role, involved in allosteric regulation of aspartate carbamoyltransferase. In Chromobacterium violaceum (strain ATCC 12472 / DSM 30191 / JCM 1249 / CCUG 213 / NBRC 12614 / NCIMB 9131 / NCTC 9757 / MK), this protein is Aspartate carbamoyltransferase regulatory chain.